Consider the following 207-residue polypeptide: Thiamine-phosphate synthase (207 aa).

4-amino-2-methyl-5-(diphosphooxymethyl)pyrimidine-binding positions include 36 to 40 and Asn68; that span reads QLRLK. Mg(2+)-binding residues include Asp69 and Asp88. Thr107 lines the 4-amino-2-methyl-5-(diphosphooxymethyl)pyrimidine pocket. 134-136 is a 2-[(2R,5Z)-2-carboxy-4-methylthiazol-5(2H)-ylidene]ethyl phosphate binding site; that stretch reads TGT. Lys137 is a 4-amino-2-methyl-5-(diphosphooxymethyl)pyrimidine binding site. Gly164 lines the 2-[(2R,5Z)-2-carboxy-4-methylthiazol-5(2H)-ylidene]ethyl phosphate pocket.

It belongs to the thiamine-phosphate synthase family. Mg(2+) serves as cofactor.

The enzyme catalyses 2-[(2R,5Z)-2-carboxy-4-methylthiazol-5(2H)-ylidene]ethyl phosphate + 4-amino-2-methyl-5-(diphosphooxymethyl)pyrimidine + 2 H(+) = thiamine phosphate + CO2 + diphosphate. It catalyses the reaction 2-(2-carboxy-4-methylthiazol-5-yl)ethyl phosphate + 4-amino-2-methyl-5-(diphosphooxymethyl)pyrimidine + 2 H(+) = thiamine phosphate + CO2 + diphosphate. The catalysed reaction is 4-methyl-5-(2-phosphooxyethyl)-thiazole + 4-amino-2-methyl-5-(diphosphooxymethyl)pyrimidine + H(+) = thiamine phosphate + diphosphate. It participates in cofactor biosynthesis; thiamine diphosphate biosynthesis; thiamine phosphate from 4-amino-2-methyl-5-diphosphomethylpyrimidine and 4-methyl-5-(2-phosphoethyl)-thiazole: step 1/1. Functionally, condenses 4-methyl-5-(beta-hydroxyethyl)thiazole monophosphate (THZ-P) and 2-methyl-4-amino-5-hydroxymethyl pyrimidine pyrophosphate (HMP-PP) to form thiamine monophosphate (TMP). In Rhodospirillum centenum (strain ATCC 51521 / SW), this protein is Thiamine-phosphate synthase.